Reading from the N-terminus, the 358-residue chain is L-lysine 3-hydroxylase (358 aa).

Histidine 178, glutamate 180, and histidine 314 together coordinate Fe cation. Residue arginine 328 coordinates 2-oxoglutarate.

The protein belongs to the clavaminate synthase family. Fe(2+) is required as a cofactor.

The enzyme catalyses L-lysine + 2-oxoglutarate + O2 = (3S)-3-hydroxy-L-lysine + succinate + CO2. Functionally, alpha-ketoglutarate-dependent dioxygenase that in vitro catalyzes the regio- and stereoselective hydroxylation of L-lysine, leading to (3S)-3-hydroxy-L-lysine. Can also use (5R)-5-hydroxy-L-lysine as substrate, but neither D-lysine nor L-ornithine. The sequence is that of L-lysine 3-hydroxylase from Catenulispora acidiphila (strain DSM 44928 / JCM 14897 / NBRC 102108 / NRRL B-24433 / ID139908).